The primary structure comprises 173 residues: Mediator of RNA polymerase II transcription subunit 10 (173 aa).

The span at Met1–Arg20 shows a compositional bias: polar residues. Positions Met1–Asp45 are disordered. The segment covering Ser21–Asp45 has biased composition (basic and acidic residues).

This sequence belongs to the Mediator complex subunit 10 family. As to quaternary structure, component of the Mediator complex.

It localises to the nucleus. In terms of biological role, component of the Mediator complex, a coactivator involved in the regulated transcription of nearly all RNA polymerase II-dependent genes. Mediator functions as a bridge to convey information from gene-specific regulatory proteins to the basal RNA polymerase II transcription machinery. Mediator is recruited to promoters by direct interactions with regulatory proteins and serves as a scaffold for the assembly of a functional preinitiation complex with RNA polymerase II and the general transcription factors. This Caenorhabditis briggsae protein is Mediator of RNA polymerase II transcription subunit 10 (mdt-10).